The following is a 146-amino-acid chain: Cytochrome b5 type B (146 aa).

Residues 1-11 constitute a propeptide that is removed on maturation; that stretch reads MATPEASGSGE. Ser-19 is subject to Phosphoserine. The Cytochrome b5 heme-binding domain maps to 20–96; it reads VTYYRLEEVA…LKQYYIGDVH (77 aa). Lys-30 bears the N6-acetyllysine mark. Phosphoserine is present on Ser-33. Heme is bound by residues His-55 and His-79. Phosphoserine is present on Ser-80. The chain crosses the membrane as a helical span at residues 119 to 136; sequence WAYWFVPIVGAILIGFLY.

Belongs to the cytochrome b5 family. As to quaternary structure, component of a complex composed of cytochrome b5, NADH-cytochrome b5 reductase (CYB5R3) and MTARC2.

Its subcellular location is the mitochondrion outer membrane. Functionally, cytochrome b5 is a membrane-bound hemoprotein functioning as an electron carrier for several membrane-bound oxygenases. The chain is Cytochrome b5 type B (Cyb5b) from Mus musculus (Mouse).